The sequence spans 395 residues: Protein HIGH CHLOROPHYLL FLUORESCENCE PHENOTYPE 244, chloroplastic (395 aa).

The transit peptide at 1 to 64 directs the protein to the chloroplast; that stretch reads MASLRLPAQL…ERSIVVPVTC (64 aa).

It belongs to the NmrA-type oxidoreductase family. In terms of assembly, component of a high molecular weight complex containing OHP1, OHP2 and HCF244, and PSII core proteins D1/D2, HCF136 and HCF173. Interacts with OHP1. Forms a trimeric complex with OHP1 and OHP2 that mutually stabilizes each subunit.

Its subcellular location is the plastid. The protein localises to the chloroplast stroma. It is found in the chloroplast thylakoid membrane. Functionally, auxiliary factor required, together with HCF173, for the biogenesis of photosystem II (PSII), especially for the synthesis of the reaction center proteins (e.g. D1), via the regulation of the corresponding mRNA (e.g. psbA) translation initiation (ribosomal loading) and stabilization. Forms a trimeric complex with OHP1 and OHP2 that is required to promote PSII core subunit assembly. The trimeric complex forms a transient PSII reaction center-like complex with PsbA, PsbD, PsbE, PsbF and PsbI subunits in thylakoids for early assembly of PSII as well as PSII repair. The trimeric complex is required for the recruitment of ribosomes to the psbA mRNA during PSII biogenesis and repair. This chain is Protein HIGH CHLOROPHYLL FLUORESCENCE PHENOTYPE 244, chloroplastic, found in Arabidopsis thaliana (Mouse-ear cress).